Reading from the N-terminus, the 571-residue chain is Isocitrate dehydrogenase kinase/phosphatase (571 aa).

ATP contacts are provided by residues 318–324 and K339; that span reads APGVRGM. Residue D374 is part of the active site.

It belongs to the AceK family.

Its subcellular location is the cytoplasm. It carries out the reaction L-seryl-[isocitrate dehydrogenase] + ATP = O-phospho-L-seryl-[isocitrate dehydrogenase] + ADP + H(+). Bifunctional enzyme which can phosphorylate or dephosphorylate isocitrate dehydrogenase (IDH) on a specific serine residue. This is a regulatory mechanism which enables bacteria to bypass the Krebs cycle via the glyoxylate shunt in response to the source of carbon. When bacteria are grown on glucose, IDH is fully active and unphosphorylated, but when grown on acetate or ethanol, the activity of IDH declines drastically concomitant with its phosphorylation. In Pseudomonas entomophila (strain L48), this protein is Isocitrate dehydrogenase kinase/phosphatase.